A 276-amino-acid chain; its full sequence is 3-methyl-2-oxobutanoate hydroxymethyltransferase (276 aa).

2 residues coordinate Mg(2+): D49 and D88. 3-methyl-2-oxobutanoate-binding positions include 49–50, D88, and K118; that span reads DS. Residue E120 participates in Mg(2+) binding. Catalysis depends on E187, which acts as the Proton acceptor.

This sequence belongs to the PanB family. In terms of assembly, homodecamer; pentamer of dimers. It depends on Mg(2+) as a cofactor.

The protein resides in the cytoplasm. The enzyme catalyses 3-methyl-2-oxobutanoate + (6R)-5,10-methylene-5,6,7,8-tetrahydrofolate + H2O = 2-dehydropantoate + (6S)-5,6,7,8-tetrahydrofolate. It functions in the pathway cofactor biosynthesis; (R)-pantothenate biosynthesis; (R)-pantoate from 3-methyl-2-oxobutanoate: step 1/2. Functionally, catalyzes the reversible reaction in which hydroxymethyl group from 5,10-methylenetetrahydrofolate is transferred onto alpha-ketoisovalerate to form ketopantoate. The sequence is that of 3-methyl-2-oxobutanoate hydroxymethyltransferase from Afipia carboxidovorans (strain ATCC 49405 / DSM 1227 / KCTC 32145 / OM5) (Oligotropha carboxidovorans).